The following is a 935-amino-acid chain: Coiled-coil domain-containing protein 66 (935 aa).

Residues 76–96 are compositionally biased toward polar residues; the sequence is LDTSQAKPENSRLTFSPSTDK. The tract at residues 76-103 is disordered; the sequence is LDTSQAKPENSRLTFSPSTDKQYSEKDS. Residue Thr-114 is modified to Phosphothreonine. At Ser-366 the chain carries Phosphoserine. A coiled-coil region spans residues 462 to 555; it reads LEHQKAIMAQ…EQRIRELAQK (94 aa). Disordered regions lie at residues 470 to 491, 577 to 602, and 738 to 794; these read AQVE…KEEQ, TISS…DTGV, and ENLS…RTQQ. Over residues 473 to 491 the composition is skewed to basic and acidic residues; sequence EENRRKKRLEEEQRKKEEQ. Positions 567 to 935 are mediates localization to cilia, centrosomes and spindle microtubules and the interaction with PCM1, CEP290, CEP104 and CSPP1; the sequence is GAQVDYKAFT…NQEDNFSSSF (369 aa). Polar residues predominate over residues 590 to 602; sequence DTSTASPKKDTGV. Phosphoserine is present on Ser-595. Over residues 752-782 the composition is skewed to basic and acidic residues; sequence SHRETESESRLHLIKKVEEPLKTPSVSKERF. The segment covering 783 to 794 has biased composition (polar residues); the sequence is QTSPAVKNRTQQ.

Homodimer; disulfide-linked. Interacts with CEP290. Interacts with PCM1. Interacts with ARMC9, TOGARAM1, CSPP1 and CEP104. Interacts with CDK5RAP2, CEP152, CEP192, TBG1 and PRC1. Widely expressed. Expressed in retina by rod photoreceptors but also detected in outer plexiform and ganglion cell layers (at protein level).

Its subcellular location is the cytoplasm. It is found in the cytoskeleton. The protein resides in the microtubule organizing center. The protein localises to the centrosome. It localises to the centriolar satellite. Its subcellular location is the cell projection. It is found in the cilium. The protein resides in the cilium basal body. The protein localises to the cilium axoneme. It localises to the photoreceptor inner segment. Its subcellular location is the photoreceptor outer segment. Functionally, microtubule-binding protein required for ciliogenesis. May function in ciliogenesis by mediating the transport of proteins like BBS4 to the cilium, but also through the organization of the centriolar satellites. Required for the assembly of signaling-competent cilia with proper structure and length. Mediates this function in part by regulating transition zone assembly and basal body recruitment of the IFT-B complex. Cooperates with the ciliopathy proteins CSPP1 and CEP104 during cilium length regulation. Plays two important roles during cell division. First, is required for mitotic progression via regulation of spindle assembly, organization and orientation, levels of spindle microtubules (MTs), kinetochore-fiber integrity, and chromosome alignment. Second, functions during cytokinesis in part by regulating assembly and organization of central spindle and midbody MTs. Plays a role in retina morphogenesis and/or homeostasis. This is Coiled-coil domain-containing protein 66 from Mus musculus (Mouse).